The sequence spans 123 residues: Small ribosomal subunit protein uS12 (123 aa).

Position 89 is a 3-methylthioaspartic acid (D89).

It belongs to the universal ribosomal protein uS12 family. As to quaternary structure, part of the 30S ribosomal subunit. Contacts proteins S8 and S17. May interact with IF1 in the 30S initiation complex.

Its function is as follows. With S4 and S5 plays an important role in translational accuracy. Functionally, interacts with and stabilizes bases of the 16S rRNA that are involved in tRNA selection in the A site and with the mRNA backbone. Located at the interface of the 30S and 50S subunits, it traverses the body of the 30S subunit contacting proteins on the other side and probably holding the rRNA structure together. The combined cluster of proteins S8, S12 and S17 appears to hold together the shoulder and platform of the 30S subunit. In Acidiphilium cryptum (strain JF-5), this protein is Small ribosomal subunit protein uS12.